Here is a 3616-residue protein sequence, read N- to C-terminus: Replicase polyprotein 1ab (3616 aa).

A C4-type; atypical zinc finger spans residues 8 to 28 (CLCTPNARVFWEHGQVYCTRC). The Peptidase C31 domain maps to 69-181 (ECRPGGLCWL…KGLCPFSDAR (113 aa)). Catalysis depends on for Nsp1-alpha papain-like cysteine proteinase activity residues C76 and H147. Residues 262–381 (NDTKFSKCWE…FRFQTRKYYG (120 aa)) enclose the Peptidase C32 domain. Residues C269 and H340 each act as for Nsp1-beta papain-like cysteine proteinase activity in the active site. One can recognise a Peptidase C33 domain in the interval 381 to 486 (GYSPPGDGAC…RGVCGGECKF (106 aa)). Active-site for Nsp2 cysteine proteinase activity residues include C390 and H456. Disordered stretches follow at residues 672–706 (SRALKSAKPKRKRNKKKKTSSPTPTPPETPTREVP) and 883–912 (PLKSGAEPTPSKRDLGVSLGDQLSQDGAPR). The span at 676–690 (KSAKPKRKRNKKKKT) shows a compositional bias: basic residues. Polar residues predominate over residues 903-912 (DQLSQDGAPR). Transmembrane regions (helical) follow at residues 942–962 (WLNHQVFLLSSHLLAMWSVVL), 977–997 (LFCLCCVLLCFHFPAIGFIPL), 1010–1030 (LSVFSVWLCVAVVVFQEVLPE), 1060–1080 (HIGVGLVGTVAGFVARVVGGP), 1085–1105 (FYFLRLMVVLDLGLVFLAVAL), 1289–1309 (VADFVCLGLYVMLNFLISAWL), 1364–1384 (ALMIAVIATVAIFIAKVSLLV), 1386–1406 (VICVFLCLLMYVFPPLSVIAF), and 1425–1445 (VQFFLLAVNFWAGVAVAVILI). An HD1 region spans residues 981–1105 (CCVLLCFHFP…LGLVFLAVAL (125 aa)). The tract at residues 1289–1448 (VADFVCLGLY…AVAVILISSW (160 aa)) is HD2. Residues 1513 to 1714 (GSLRTRGCAK…AVVESLPTPE (202 aa)) form the Peptidase S32 domain. Residues H1551, D1576, and S1628 each act as charge relay system; for 3C-like serine proteinase activity in the active site. Helical transmembrane passes span 1715–1735 (GALSSVQLLCVFFFLWRLIHV), 1737–1757 (FVPVIAVAFFFLNEILPVVLA), 1761–1781 (FSFALSLFSVFTGFSVQVLLL), and 1832–1852 (SKEIFVTLLAIHVLALLLSLF). Residues 1737–1852 (FVPVIAVAFF…HVLALLLSLF (116 aa)) are HD3. Residues 2194–2352 (SLNGLQQSSA…LPYKLHPVRG (159 aa)) form the NiRAN domain. Residues 2590 to 2724 (GRCLEADLAS…YNESDELPNY (135 aa)) form the RdRp catalytic domain. Residues 2844–2907 (KKKCRTCAHC…SSAMNLNTEL (64 aa)) enclose the AV ZBD domain. 12 residues coordinate Zn(2+): C2850, C2853, C2863, C2868, H2871, H2873, H2875, H2877, C2884, H2886, C2893, and C2896. The region spanning 2964 to 3116 (QVMKVAQTCA…AFSLMPGRQL (153 aa)) is the (+)RNA virus helicase ATP-binding domain. ATP is bound at residue 2992-2999 (GAPGTGKT). One can recognise a (+)RNA virus helicase C-terminal domain in the interval 3117 to 3248 (IEVFRFGPAV…CGDQPKMIVG (132 aa)). Residues 3272-3368 (EGTASPLPQV…LTKYLKGESV (97 aa)) form the AV-Nsp11N/CoV-Nsp15M domain. Residues 3370 to 3492 (LPDSIMSTGR…MVWKDATAYF (123 aa)) enclose the NendoU domain.

This sequence belongs to the arteriviridae polyprotein family. Specific enzymatic cleavages in vivo by its own proteases yield mature proteins. There are two alternative pathways for processing. Either nsp4-5 is cleaved, which represents the major pathway or the nsp5-6 and nsp6-7 are processed, which represents the minor pathway. The major pathway occurs when nsp2 acts as a cofactor for nsp4.

The protein localises to the host membrane. The protein resides in the host cytoplasm. It is found in the host perinuclear region. It catalyses the reaction RNA(n) + a ribonucleoside 5'-triphosphate = RNA(n+1) + diphosphate. The catalysed reaction is ATP + H2O = ADP + phosphate + H(+). It carries out the reaction uridylyl-uridylyl-ribonucleotide-RNA = a 3'-end uridylyl-2',3'-cyclophospho-uridine-RNA + a 5'-end dephospho-ribonucleoside-RNA. The replicase polyprotein 1ab is a multifunctional protein: it contains the activities necessary for the transcription of negative stranded RNA, leader RNA, subgenomic mRNAs and progeny virion RNA as well as proteinases responsible for the cleavage of the polyprotein into functional products. In terms of biological role, the Nsp1 chain is essential for viral subgenomic mRNA synthesis. Its function is as follows. The 3C-like serine proteinase chain is responsible for the majority of cleavages as it cleaves the C-terminus of the polyprotein. Functionally, the helicase chain, which contains a zinc finger structure, displays RNA and DNA duplex-unwinding activities with 5' to 3' polarity. Plays a role in viral transcription/replication and prevents the simultaneous activation of host cell dsRNA sensors, such as MDA5/IFIH1, OAS, and PKR. Acts by degrading the 5'-polyuridines generated during replication of the poly(A) region of viral genomic and subgenomic RNAs. Catalyzes a two-step reaction in which a 2'3'-cyclic phosphate (2'3'-cP) is first generated by 2'-O transesterification, which is then hydrolyzed to a 3'-phosphate (3'-P). If not degraded, poly(U) RNA would hybridize with poly(A) RNA tails and activate host dsRNA sensors. The sequence is that of Replicase polyprotein 1ab (rep) from Mus musculus domesticus (western European house mouse).